Consider the following 196-residue polypeptide: HTH-type transcriptional regulator EcpR (196 aa).

One can recognise an HTH luxR-type domain in the interval 138–196 (KDIKKDKITDREMEIIRMTAQGMLPKSIARIENCSVKTVYTHRRNAEAKLYSKLYKLVQ). A DNA-binding region (H-T-H motif) is located at residues 162 to 181 (PKSIARIENCSVKTVYTHRR).

It belongs to the EcpR/MatA family.

The protein resides in the cytoplasm. Part of the ecpRABCDE operon, which encodes the E.coli common pilus (ECP). ECP is found in both commensal and pathogenic strains and plays a dual role in early-stage biofilm development and host cell recognition. Positively regulates the expression of the ecp operon by binding to two TTCCT boxes. The polypeptide is HTH-type transcriptional regulator EcpR (ecpR) (Escherichia coli O157:H7).